Consider the following 790-residue polypeptide: Type VI secretion system spike protein VgrG5 (790 aa).

Composition is skewed to basic and acidic residues over residues 753-763 and 772-790; these read GFRDYRAEMPQ and AYRRDASRPGAADKDEPTP. The segment at 753-790 is disordered; that stretch reads GFRDYRAEMPQHKPRSAPDAYRRDASRPGAADKDEPTP.

Belongs to the VgrG protein family.

The protein resides in the secreted. Its function is as follows. Part of the H2 type VI secretion system (H2-T6SS) specialized secretion system, which delivers several virulence factors in both prokaryotic and eukaryotic cells during infection. Allows the delivery of the phospholipase effector PldB to target cells where it exerts its toxicity. Also plays a role in VgrG4b and its effector PldA secretion. This Pseudomonas aeruginosa (strain ATCC 15692 / DSM 22644 / CIP 104116 / JCM 14847 / LMG 12228 / 1C / PRS 101 / PAO1) protein is Type VI secretion system spike protein VgrG5.